The chain runs to 136 residues: Small ribosomal subunit protein uS9 (136 aa).

The interval 111-136 is disordered; it reads DARRTEPHKPSRSTKGPRAKRQKSYR. A compositionally biased stretch (basic residues) spans 120–136; sequence PSRSTKGPRAKRQKSYR.

This sequence belongs to the universal ribosomal protein uS9 family.

The polypeptide is Small ribosomal subunit protein uS9 (rps9) (Methanocaldococcus jannaschii (strain ATCC 43067 / DSM 2661 / JAL-1 / JCM 10045 / NBRC 100440) (Methanococcus jannaschii)).